We begin with the raw amino-acid sequence, 279 residues long: Tryptophan 2,3-dioxygenase (279 aa).

Residues 48-52, Tyr-110, and Arg-114 contribute to the substrate site; that span reads FIVIH. A heme-binding site is contributed by His-237. Thr-251 is a substrate binding site.

Belongs to the tryptophan 2,3-dioxygenase family. As to quaternary structure, homotetramer. Heme is required as a cofactor.

It catalyses the reaction L-tryptophan + O2 = N-formyl-L-kynurenine. The protein operates within amino-acid degradation; L-tryptophan degradation via kynurenine pathway; L-kynurenine from L-tryptophan: step 1/2. Its function is as follows. Heme-dependent dioxygenase that catalyzes the oxidative cleavage of the L-tryptophan (L-Trp) pyrrole ring and converts L-tryptophan to N-formyl-L-kynurenine. Catalyzes the oxidative cleavage of the indole moiety. The polypeptide is Tryptophan 2,3-dioxygenase (Bacillus cereus (strain ZK / E33L)).